The sequence spans 207 residues: Large ribosomal subunit protein bL25 (207 aa).

A disordered region spans residues 182 to 207 (QDLGDESVQEEQAAESAEGESEGSED).

It belongs to the bacterial ribosomal protein bL25 family. CTC subfamily. In terms of assembly, part of the 50S ribosomal subunit; part of the 5S rRNA/L5/L18/L25 subcomplex. Contacts the 5S rRNA. Binds to the 5S rRNA independently of L5 and L18.

Its function is as follows. This is one of the proteins that binds to the 5S RNA in the ribosome where it forms part of the central protuberance. The chain is Large ribosomal subunit protein bL25 from Micrococcus luteus (strain ATCC 4698 / DSM 20030 / JCM 1464 / CCM 169 / CCUG 5858 / IAM 1056 / NBRC 3333 / NCIMB 9278 / NCTC 2665 / VKM Ac-2230) (Micrococcus lysodeikticus).